The primary structure comprises 1217 residues: Myosin-5 (1217 aa).

Over residues 1–11 (MAILKRGARNK) the composition is skewed to basic residues. The tract at residues 1-24 (MAILKRGARNKTHQEPAKRGGNNI) is disordered. Residues 37 to 716 (VGVSDLTLLT…TLFALENMRD (680 aa)) form the Myosin motor domain. 130 to 137 (GESGAGKT) lines the ATP pocket. The residue at position 358 (Ser358) is a Phosphoserine. The interval 405-487 (SIGILDIYGF…PGIFAAMNDS (83 aa)) is actin-binding. IQ domains lie at 720 to 740 (HNMA…RIDA) and 741 to 766 (AVKI…YGTS). The 191-residue stretch at 772–962 (KERRSMSLLG…TIFVRRGNPA (191 aa)) folds into the TH1 domain. Disordered regions lie at residues 956–1102 (VRRG…NPSE), 1145–1174 (GAKA…AQTV), and 1197–1217 (NKMR…DDDW). Residues 965–974 (KSKKKPRKKS) are compositionally biased toward basic residues. Residues 976–987 (GMSAPTTQSSKT) are compositionally biased toward polar residues. Residues 994-1007 (SSNNQNTTVSQSLN) show a composition bias toward low complexity. The segment covering 1025–1038 (PAPPPPGSKKPAPQ) has biased composition (pro residues). Over residues 1050–1071 (PQAQMQTQTQIPASQSSATQSS) the composition is skewed to low complexity. Positions 1072-1081 (IPPPPPPPPS) are enriched in pro residues. An SH3 domain is found at 1083–1145 (TSEPQFEAAY…PTAYMVKHEG (63 aa)). A compositionally biased stretch (polar residues) spans 1162–1174 (IQNQSQPASAQTV). Over residues 1203–1217 (SDEEAAASSDNDDDW) the composition is skewed to acidic residues.

It belongs to the TRAFAC class myosin-kinesin ATPase superfamily. Myosin family. Phosphorylation of the TEDS site (Ser-358) is required for the polarization of the actin cytoskeleton. Phosphorylation probably activates the myosin-I ATPase activity.

The protein localises to the cytoplasm. It localises to the cytoskeleton. It is found in the actin patch. Type-I myosin implicated in the organization of the actin cytoskeleton. Required for proper actin cytoskeleton polarization. At the cell cortex, assembles in patch-like structures together with proteins from the actin-polymerizing machinery and promotes actin assembly. Functions as actin nucleation-promoting factor (NPF) for the Arp2/3 complex. This chain is Myosin-5 (MYO5), found in Candida glabrata (strain ATCC 2001 / BCRC 20586 / JCM 3761 / NBRC 0622 / NRRL Y-65 / CBS 138) (Yeast).